Consider the following 593-residue polypeptide: Aspartate--tRNA ligase (593 aa).

Glu-180 contributes to the L-aspartate binding site. Positions 204 to 207 are aspartate; it reads QIFK. Arg-226 contacts L-aspartate. Residues 226-228 and Gln-235 each bind ATP; that span reads RDE. His-453 serves as a coordination point for L-aspartate. Glu-487 serves as a coordination point for ATP. Arg-494 contacts L-aspartate. ATP is bound at residue 539 to 542; the sequence is GLDR.

It belongs to the class-II aminoacyl-tRNA synthetase family. Type 1 subfamily. In terms of assembly, homodimer.

The protein resides in the cytoplasm. The enzyme catalyses tRNA(Asp) + L-aspartate + ATP = L-aspartyl-tRNA(Asp) + AMP + diphosphate. Functionally, catalyzes the attachment of L-aspartate to tRNA(Asp) in a two-step reaction: L-aspartate is first activated by ATP to form Asp-AMP and then transferred to the acceptor end of tRNA(Asp). The sequence is that of Aspartate--tRNA ligase from Clostridium botulinum (strain ATCC 19397 / Type A).